Consider the following 146-residue polypeptide: MSAKKVYGFLTQAFIFAVIMLVSNMIAAIVPIPIPASVVGLVLLFLLLCLKVIKLEQVETLGTSLTSLIGFLFVPSGISVMNSLGVMQQYGLQIVLVILLATIILLGATGLFSQLILSLSGKRKTEADMKTKTVQSPQNNNELVHH.

Transmembrane regions (helical) follow at residues 7-29, 34-53, 65-87, and 97-119; these read YGFL…IAAI, IPAS…LKVI, LTSL…LGVM, and VILL…ILSL.

It belongs to the CidA/LrgA family. LrgA subfamily.

It localises to the cell membrane. Its function is as follows. Inhibits the expression or activity of extracellular murein hydrolases by interacting, possibly with LrgB, with the holin-like protein CidA. The LrgAB and CidA proteins may affect the proton motive force of the membrane. May be involved in programmed cell death (PCD), possibly triggering PCD in response to antibiotics and environmental stresses. The polypeptide is Antiholin-like protein LrgA (Bacillus subtilis (strain 168)).